We begin with the raw amino-acid sequence, 631 residues long: PTS system glucosamine-specific EIICBA component (631 aa).

The PTS EIIC type-1 domain occupies 3–382 (KKAFQILQQL…WNLKTPGRET (380 aa)). Helical transmembrane passes span 12–32 (LGRA…LLRF), 56–76 (LIFA…AGLA), 106–126 (HLID…AYLY), 149–169 (IITS…WPLI), 196–216 (LLIP…MMGE), 243–263 (FMMG…LAII), 298–318 (FLFV…VIFV), and 350–370 (VVIP…RFAI). The PTS EIIB type-1 domain maps to 397-478 (DQLAFHVLQA…KTIMAGGVPA (82 aa)). Cys-419 (phosphocysteine intermediate; for EIIB activity) is an active-site residue. A Phosphocysteine modification is found at Cys-419. Positions 515–619 (DQVFSEKMMG…SAITPVIFTN (105 aa)) constitute a PTS EIIA type-1 domain. Residue His-567 is the Tele-phosphohistidine intermediate; for EIIA activity of the active site. A Phosphohistidine modification is found at His-567.

The protein resides in the cell membrane. It catalyses the reaction D-glucosamine(out) + N(pros)-phospho-L-histidyl-[protein] = D-glucosamine 6-phosphate(in) + L-histidyl-[protein]. Functionally, the phosphoenolpyruvate-dependent sugar phosphotransferase system (sugar PTS), a major carbohydrate active transport system, catalyzes the phosphorylation of incoming sugar substrates concomitantly with their translocation across the cell membrane. This system is involved in glucosamine transport. In vitro, when expressed in the absence of GamR and NagP, can transport N-acetylglucosamine. In terms of biological role, in addition, plays an important role in the phosphorylation of EIIA-deficient PTS transporters. The EIIA domain can transfer a phosphoryl group to EIIA-deficient PTS transporters, enabling growth with maltose, N-acetylglucosamine, sucrose or trehalose as the sole carbon source. The sequence is that of PTS system glucosamine-specific EIICBA component from Bacillus subtilis (strain 168).